Consider the following 150-residue polypeptide: uncharacterized protein (150 aa).

A Rhodanese domain is found at 19–93; that stretch reads GAQDYVLVDV…SSKRLALRES (75 aa).

This is an uncharacterized protein from Synechococcus elongatus.